A 648-amino-acid polypeptide reads, in one-letter code: Beta-glucuronidase (648 aa).

An N-terminal signal peptide occupies residues 1 to 19 (GLAMAWAVLGPLLWGCALA). Asn-170, Asn-269, and Asn-417 each carry an N-linked (GlcNAc...) asparagine glycan. Catalysis depends on Glu-448, which acts as the Proton donor. Residue Asn-628 is glycosylated (N-linked (GlcNAc...) asparagine).

It belongs to the glycosyl hydrolase 2 family. As to quaternary structure, homotetramer.

It is found in the lysosome. The enzyme catalyses a beta-D-glucuronoside + H2O = D-glucuronate + an alcohol. Its activity is regulated as follows. Inhibited by L-aspartic acid. Its function is as follows. Plays an important role in the degradation of dermatan and keratan sulfates. The chain is Beta-glucuronidase (GUSB) from Chlorocebus aethiops (Green monkey).